The primary structure comprises 902 residues: Auxin response factor 5 (902 aa).

Residues 158 to 260 (FCKTLTASDT…QLMVGVRRAN (103 aa)) constitute a DNA-binding region (TF-B3). The disordered stretch occupies residues 497–543 (SEMVQPQNKLTVNPSASNTSGQEQNLSQSMSAPAKPENSTLSGCSSG). A PB1 domain is found at 793 to 877 (RTYTKVQKTG…RCIRILSPTE (85 aa)).

This sequence belongs to the ARF family. Homodimers and heterodimers. Interacts with BRX and the auxin-responsive proteins IAA1, IAA12 (BODENLOS), IAA17 and ARF7. Expressed in the whole plant with a lower expression in leaves. Detected in embryo axis, provascular tissues, procambium and some differentiated vascular regions of mature organs.

It localises to the nucleus. Auxin response factors (ARFs) are transcriptional factors that bind specifically to the DNA sequence 5'-TGTCTC-3' found in the auxin-responsive promoter elements (AuxREs). Seems to act as transcriptional activator. Formation of heterodimers with Aux/IAA proteins may alter their ability to modulate early auxin response genes expression. Mediates embryo axis formation and vascular tissues differentiation. Functionally redundant with ARF7. May be necessary to counteract AMP1 activity. In Arabidopsis thaliana (Mouse-ear cress), this protein is Auxin response factor 5 (ARF5).